A 99-amino-acid chain; its full sequence is Plastocyanin (99 aa).

Residues 1 to 99 enclose the Plastocyanin-like domain; that stretch reads AEVLLGSSDG…AGMVGKVTVN (99 aa). Cu cation is bound by residues His-37, Cys-84, His-87, and Met-92.

Belongs to the plastocyanin family. Cu(2+) is required as a cofactor.

It is found in the plastid. The protein resides in the chloroplast thylakoid membrane. In terms of biological role, participates in electron transfer between P700 and the cytochrome b6-f complex in photosystem I. This Lactuca sativa (Garden lettuce) protein is Plastocyanin (PETE).